The chain runs to 384 residues: Erythronate-4-phosphate dehydrogenase (384 aa).

Positions 45 and 66 each coordinate substrate. NAD(+) contacts are provided by aspartate 147 and threonine 177. The active site involves arginine 210. An NAD(+)-binding site is contributed by aspartate 234. Glutamate 239 is a catalytic residue. Histidine 256 serves as the catalytic Proton donor. Glycine 259 contributes to the NAD(+) binding site. Tyrosine 260 is a binding site for substrate.

Belongs to the D-isomer specific 2-hydroxyacid dehydrogenase family. PdxB subfamily. As to quaternary structure, homodimer.

The protein localises to the cytoplasm. The enzyme catalyses 4-phospho-D-erythronate + NAD(+) = (R)-3-hydroxy-2-oxo-4-phosphooxybutanoate + NADH + H(+). It functions in the pathway cofactor biosynthesis; pyridoxine 5'-phosphate biosynthesis; pyridoxine 5'-phosphate from D-erythrose 4-phosphate: step 2/5. Its function is as follows. Catalyzes the oxidation of erythronate-4-phosphate to 3-hydroxy-2-oxo-4-phosphonooxybutanoate. The polypeptide is Erythronate-4-phosphate dehydrogenase (Marinobacter nauticus (strain ATCC 700491 / DSM 11845 / VT8) (Marinobacter aquaeolei)).